The following is a 1259-amino-acid chain: Zinc finger protein BRUTUS-like At1g74770 (1259 aa).

The helical transmembrane segment at 441-461 threads the bilayer; sequence LLYTSIHVLPLGLLKCVILWF. 2 stretches are compositionally biased toward basic and acidic residues: residues 904 to 916 and 924 to 934; these read KEEK…ESKK and EGDKEQTDKMS. The interval 904 to 938 is disordered; the sequence is KEEKDLERSESKKICRGSNQEGDKEQTDKMSQKVS. The CHY-type zinc finger occupies 1018–1087; the sequence is PHSLIFGCNH…ANCSNTSCKS (70 aa). Zn(2+) contacts are provided by Cys1025, His1027, Cys1038, Cys1039, Cys1045, Cys1048, His1049, His1055, Cys1067, Cys1070, Cys1080, Cys1085, Cys1094, Cys1097, His1108, Cys1109, Cys1112, Cys1115, His1127, Cys1128, Cys1131, Cys1134, His1142, and Cys1144. The CTCHY-type zinc finger occupies 1089-1152; the sequence is MGKYFCKICK…VCREKCLEDN (64 aa). The segment at 1153 to 1195 adopts an RING-type; atypical zinc-finger fold; sequence CPICHEYIFTSSSPVKALPCGHLMHSTCFQEYTCSHYTCPVCS.

Binds zinc and iron ions.

It localises to the membrane. It is found in the nucleus. It participates in protein modification; protein ubiquitination. Functionally, probable E3 ubiquitin-protein ligase that may regulate the response to iron deficiency and thus contributes to iron homeostasis. In Arabidopsis thaliana (Mouse-ear cress), this protein is Zinc finger protein BRUTUS-like At1g74770.